We begin with the raw amino-acid sequence, 417 residues long: Histidine--tRNA ligase (417 aa).

It belongs to the class-II aminoacyl-tRNA synthetase family.

The protein resides in the cytoplasm. It catalyses the reaction tRNA(His) + L-histidine + ATP = L-histidyl-tRNA(His) + AMP + diphosphate + H(+). The protein is Histidine--tRNA ligase of Pyrobaculum neutrophilum (strain DSM 2338 / JCM 9278 / NBRC 100436 / V24Sta) (Thermoproteus neutrophilus).